The primary structure comprises 332 residues: Glycerol-3-phosphate dehydrogenase [NAD(P)+] (332 aa).

Residues Trp11, Arg30, and Lys108 each coordinate NADPH. The sn-glycerol 3-phosphate site is built by Lys108, Gly137, and Ser139. Ala141 contributes to the NADPH binding site. Residues Lys192, Asp245, Ser255, Arg256, and Asn257 each coordinate sn-glycerol 3-phosphate. Lys192 acts as the Proton acceptor in catalysis. Residue Arg256 participates in NADPH binding. 2 residues coordinate NADPH: Val280 and Glu282.

It belongs to the NAD-dependent glycerol-3-phosphate dehydrogenase family.

It localises to the cytoplasm. The enzyme catalyses sn-glycerol 3-phosphate + NAD(+) = dihydroxyacetone phosphate + NADH + H(+). It carries out the reaction sn-glycerol 3-phosphate + NADP(+) = dihydroxyacetone phosphate + NADPH + H(+). Its pathway is membrane lipid metabolism; glycerophospholipid metabolism. In terms of biological role, catalyzes the reduction of the glycolytic intermediate dihydroxyacetone phosphate (DHAP) to sn-glycerol 3-phosphate (G3P), the key precursor for phospholipid synthesis. This is Glycerol-3-phosphate dehydrogenase [NAD(P)+] from Burkholderia cenocepacia (strain HI2424).